The following is a 95-amino-acid chain: Aspartyl/glutamyl-tRNA(Asn/Gln) amidotransferase subunit C (95 aa).

This sequence belongs to the GatC family. In terms of assembly, heterotrimer of A, B and C subunits.

The enzyme catalyses L-glutamyl-tRNA(Gln) + L-glutamine + ATP + H2O = L-glutaminyl-tRNA(Gln) + L-glutamate + ADP + phosphate + H(+). It carries out the reaction L-aspartyl-tRNA(Asn) + L-glutamine + ATP + H2O = L-asparaginyl-tRNA(Asn) + L-glutamate + ADP + phosphate + 2 H(+). In terms of biological role, allows the formation of correctly charged Asn-tRNA(Asn) or Gln-tRNA(Gln) through the transamidation of misacylated Asp-tRNA(Asn) or Glu-tRNA(Gln) in organisms which lack either or both of asparaginyl-tRNA or glutaminyl-tRNA synthetases. The reaction takes place in the presence of glutamine and ATP through an activated phospho-Asp-tRNA(Asn) or phospho-Glu-tRNA(Gln). The chain is Aspartyl/glutamyl-tRNA(Asn/Gln) amidotransferase subunit C from Bradyrhizobium sp. (strain ORS 278).